The sequence spans 544 residues: Cytochrome P450 monooxygenase notG' (544 aa).

The N-terminal stretch at 1–22 (MELPFSAMSLLYLLVGIAGVIS) is a signal peptide. 2 helical membrane passes run 42 to 62 (WYTLIITAPTVVVSIVWGLPL) and 66 to 86 (AKATGGWALTYFAGLYTSLLL). Residues asparagine 226 and asparagine 404 are each glycosylated (N-linked (GlcNAc...) asparagine). A heme-binding site is contributed by cysteine 487.

This sequence belongs to the cytochrome P450 family. Requires heme as cofactor.

The protein localises to the membrane. Its pathway is alkaloid biosynthesis. Cytochrome P450 monooxygenase; part of the gene cluster that mediates the biosynthesis of notoamide, a fungal indole alkaloid that belongs to a family of natural products containing a characteristic bicyclo[2.2.2]diazaoctane core. The first step of notoamide biosynthesis involves coupling of L-proline and L-tryptophan by the bimodular NRPS notE', to produce cyclo-L-tryptophan-L-proline called brevianamide F. The reverse prenyltransferase notF' then acts as a deoxybrevianamide E synthase and converts brevianamide F to deoxybrevianamide E via reverse prenylation at C-2 of the indole ring leading to the bicyclo[2.2.2]diazaoctane core. Deoxybrevianamide E is further hydroxylated at C-6 of the indole ring, likely catalyzed by the cytochrome P450 monooxygenase notG', to yield 6-hydroxy-deoxybrevianamide E. 6-hydroxy-deoxybrevianamide E is a specific substrate of the prenyltransferase notC' for normal prenylation at C-7 to produce 6-hydroxy-7-prenyl-deoxybrevianamide, also called notoamide S. As the proposed pivotal branching point in notoamide biosynthesis, notoamide S can be diverted to notoamide E through an oxidative pyran ring closure putatively catalyzed by either notH' cytochrome P450 monooxygenase or the notD' FAD-linked oxidoreductase. This step would be followed by an indole 2,3-epoxidation-initiated pinacol-like rearrangement catalyzed by the notB' FAD-dependent monooxygenase leading to the formation of notoamide C and notoamide D. On the other hand notoamide S is converted to notoamide T by notH' (or notD'), a bifunctional oxidase that also functions as the intramolecular Diels-Alderase responsible for generation of (-)-notoamide T. To generate antipodal (+)-notoaminide T, notH (or notD) in Aspergillus strain MF297-2 is expected to catalyze a Diels-Alder reaction leading to the opposite stereochemistry. The remaining oxidoreductase notD' (or notH') likely catalyzes the oxidative pyran ring formation to yield (-)-stephacidin A. The FAD-dependent monooxygenase notI' is highly similar to notB' and is predicted to catalyze a similar conversion from (-)-stephacidin A to (+)-notoamide B via the 2,3-epoxidation of (-)-stephacidin A followed by a pinacol-type rearrangement. Finally, it remains unclear which enzyme could be responsible for the final hydroxylation steps leading to notoamide A and sclerotiamide. The protein is Cytochrome P450 monooxygenase notG' of Aspergillus versicolor.